Reading from the N-terminus, the 386-residue chain is Acyl-lipid omega-3 desaturase (cytochrome b5), endoplasmic reticulum (386 aa).

Positions 1 to 30 (MVVAMDQRTNVNGDPGAGDRKKEERFDPSA) are disordered. Residues 17-27 (AGDRKKEERFD) show a composition bias toward basic and acidic residues. A helical membrane pass occupies residues 63-83 (IIAVAALAIAAVYVDSWFLWP). The Histidine box-1 signature appears at 101-105 (HDCGH). A Histidine box-2 motif is present at residues 137 to 141 (HRTHH). A run of 2 helical transmembrane segments spans residues 220–240 (WSIM…LAVL) and 242–262 (VYGV…YLHH). The Histidine box-3 signature appears at 304 to 308 (HVIHH).

The protein belongs to the fatty acid desaturase type 1 family. As to expression, abundant in leaves and seedlings. Barely detectable in root tissue.

It is found in the endoplasmic reticulum membrane. It catalyses the reaction a (9Z,12Z)-octadecadienoyl-containing glycerolipid + 2 Fe(II)-[cytochrome b5] + O2 + 2 H(+) = (9Z,12Z,15Z)-octadecatrienoyl-containing glycerolipid + 2 Fe(III)-[cytochrome b5] + 2 H2O. The protein operates within lipid metabolism; polyunsaturated fatty acid biosynthesis. In terms of biological role, microsomal (ER) omega-3 fatty acid desaturase introduces the third double bond in the biosynthesis of 18:3 fatty acids, important constituents of plant membranes. It is thought to use cytochrome b5 as an electron donor and to act on fatty acids esterified to phosphatidylcholine and, possibly, other phospholipids. The sequence is that of Acyl-lipid omega-3 desaturase (cytochrome b5), endoplasmic reticulum from Arabidopsis thaliana (Mouse-ear cress).